The sequence spans 354 residues: Glycerol-1-phosphate dehydrogenase [NAD(P)+] (354 aa).

NAD(+)-binding positions include 103–107 and 125–128; these read GRSVD and TAAS. Asp-130 contributes to the substrate binding site. Position 134 (Ser-134) interacts with NAD(+). Position 176 (Asp-176) interacts with substrate. Residues Asp-176 and His-255 each contribute to the Zn(2+) site. A substrate-binding site is contributed by His-259. His-271 lines the Zn(2+) pocket.

This sequence belongs to the glycerol-1-phosphate dehydrogenase family. As to quaternary structure, homodimer. It depends on Zn(2+) as a cofactor.

Its subcellular location is the cytoplasm. The enzyme catalyses sn-glycerol 1-phosphate + NAD(+) = dihydroxyacetone phosphate + NADH + H(+). It carries out the reaction sn-glycerol 1-phosphate + NADP(+) = dihydroxyacetone phosphate + NADPH + H(+). The protein operates within membrane lipid metabolism; glycerophospholipid metabolism. Functionally, catalyzes the NAD(P)H-dependent reduction of dihydroxyacetonephosphate (DHAP or glycerone phosphate) to glycerol 1-phosphate (G1P). The G1P thus generated is used as the glycerophosphate backbone of phospholipids in the cellular membranes of Archaea. The sequence is that of Glycerol-1-phosphate dehydrogenase [NAD(P)+] from Nitrosopumilus maritimus (strain SCM1).